We begin with the raw amino-acid sequence, 246 residues long: uncharacterized protein (246 aa).

The protein to M.jannaschii MJ1676.

This is an uncharacterized protein from Methanothermobacter thermautotrophicus (strain ATCC 29096 / DSM 1053 / JCM 10044 / NBRC 100330 / Delta H) (Methanobacterium thermoautotrophicum).